Consider the following 168-residue polypeptide: Photosystem I assembly protein Ycf3 (168 aa).

TPR repeat units lie at residues 35-68, 72-105, and 120-153; these read AFTY…EIDP, SYIL…NPFL, and GEQA…TPGN.

It belongs to the Ycf3 family.

It localises to the plastid. The protein localises to the chloroplast thylakoid membrane. In terms of biological role, essential for the assembly of the photosystem I (PSI) complex. May act as a chaperone-like factor to guide the assembly of the PSI subunits. This chain is Photosystem I assembly protein Ycf3, found in Ranunculus macranthus (Large buttercup).